The chain runs to 492 residues: Regulatory protein ViaA (492 aa).

Belongs to the ViaA family. As to quaternary structure, homodimer. Interacts with RavA.

It localises to the cytoplasm. Component of the RavA-ViaA chaperone complex, which may act on the membrane to optimize the function of some of the respiratory chains. ViaA stimulates the ATPase activity of RavA. In Pectobacterium carotovorum subsp. carotovorum (strain PC1), this protein is Regulatory protein ViaA.